The sequence spans 128 residues: Aspartate 1-decarboxylase (128 aa).

Ser25 acts as the Schiff-base intermediate with substrate; via pyruvic acid in catalysis. Residue Ser25 is modified to Pyruvic acid (Ser). Substrate is bound at residue Thr57. Tyr58 acts as the Proton donor in catalysis. 73–75 (GSA) is a binding site for substrate.

It belongs to the PanD family. Heterooctamer of four alpha and four beta subunits. Requires pyruvate as cofactor. Is synthesized initially as an inactive proenzyme, which is activated by self-cleavage at a specific serine bond to produce a beta-subunit with a hydroxyl group at its C-terminus and an alpha-subunit with a pyruvoyl group at its N-terminus.

The protein resides in the cytoplasm. It carries out the reaction L-aspartate + H(+) = beta-alanine + CO2. It participates in cofactor biosynthesis; (R)-pantothenate biosynthesis; beta-alanine from L-aspartate: step 1/1. Catalyzes the pyruvoyl-dependent decarboxylation of aspartate to produce beta-alanine. The chain is Aspartate 1-decarboxylase from Burkholderia cenocepacia (strain ATCC BAA-245 / DSM 16553 / LMG 16656 / NCTC 13227 / J2315 / CF5610) (Burkholderia cepacia (strain J2315)).